The chain runs to 64 residues: Conotoxin Im11.1 (64 aa).

The first 26 residues, 1 to 26, serve as a signal peptide directing secretion; that stretch reads MMFRLTSVSCFLLVIACLNLVVLTNA. Cystine bridges form between cysteine 27-cysteine 41, cysteine 34-cysteine 46, cysteine 40-cysteine 50, and cysteine 45-cysteine 54. Asparagine 57 is subject to Asparagine amide. Positions 61 to 64 are excised as a propeptide; the sequence is ATFQ.

This sequence belongs to the conotoxin I2 superfamily. In terms of tissue distribution, expressed by the venom duct.

It is found in the secreted. The protein is Conotoxin Im11.1 of Conus imperialis (Imperial cone).